A 461-amino-acid polypeptide reads, in one-letter code: Elongation factor 1-alpha (461 aa).

N,N,N-trimethylglycine is present on glycine 2. The tr-type G domain occupies 5 to 242; it reads KIHINIVVIG…DAILPPSRPT (238 aa). Residues 14-21 are G1; the sequence is GHVDSGKS. Position 14–21 (14–21) interacts with GTP; it reads GHVDSGKS. Residues 70–74 are G2; sequence GITID. Residues 91-94 are G3; sequence DAPG. Residues 153-156 and 194-196 contribute to the GTP site; these read NKMD and SGW. Residues 153-156 are G4; the sequence is NKMD. The segment at 194–196 is G5; that stretch reads SGW. 2 positions are modified to 5-glutamyl glycerylphosphorylethanolamine: glutamate 301 and glutamate 374.

Belongs to the TRAFAC class translation factor GTPase superfamily. Classic translation factor GTPase family. EF-Tu/EF-1A subfamily.

It is found in the cytoplasm. It catalyses the reaction GTP + H2O = GDP + phosphate + H(+). Translation elongation factor that catalyzes the GTP-dependent binding of aminoacyl-tRNA (aa-tRNA) to the A-site of ribosomes during the elongation phase of protein synthesis. Base pairing between the mRNA codon and the aa-tRNA anticodon promotes GTP hydrolysis, releasing the aa-tRNA from EEF1A1 and allowing its accommodation into the ribosome. The growing protein chain is subsequently transferred from the P-site peptidyl tRNA to the A-site aa-tRNA, extending it by one amino acid through ribosome-catalyzed peptide bond formation. The polypeptide is Elongation factor 1-alpha (eef1a) (Oryzias latipes (Japanese rice fish)).